The following is a 221-amino-acid chain: Ribosomal RNA large subunit methyltransferase E (221 aa).

Positions 60, 62, 89, 105, and 134 each coordinate S-adenosyl-L-methionine. Catalysis depends on K174, which acts as the Proton acceptor.

This sequence belongs to the class I-like SAM-binding methyltransferase superfamily. RNA methyltransferase RlmE family.

The protein localises to the cytoplasm. It catalyses the reaction uridine(2552) in 23S rRNA + S-adenosyl-L-methionine = 2'-O-methyluridine(2552) in 23S rRNA + S-adenosyl-L-homocysteine + H(+). In terms of biological role, specifically methylates the uridine in position 2552 of 23S rRNA at the 2'-O position of the ribose in the fully assembled 50S ribosomal subunit. The chain is Ribosomal RNA large subunit methyltransferase E from Cupriavidus taiwanensis (strain DSM 17343 / BCRC 17206 / CCUG 44338 / CIP 107171 / LMG 19424 / R1) (Ralstonia taiwanensis (strain LMG 19424)).